The primary structure comprises 196 residues: Putative 3-methyladenine DNA glycosylase (196 aa).

Belongs to the DNA glycosylase MPG family.

The chain is Putative 3-methyladenine DNA glycosylase from Chlorobium phaeobacteroides (strain DSM 266 / SMG 266 / 2430).